The sequence spans 763 residues: High glucose sensor RGT2 (763 aa).

Residues 1–28 form a disordered region; it reads MNDSQNCLRQREENSHLNPGNDFGHHQG. The Cytoplasmic segment spans residues 1 to 99; that stretch reads MNDSQNCLRQ…PLPLRSNVMS (99 aa). The helical transmembrane segment at 100–120 threads the bilayer; the sequence is VLVGIFVAVGGFLFGYDTGLI. Over 121–144 the chain is Extracellular; it reads NSITDMPYVKTYIAPNHSYFTTSQ. The N-linked (GlcNAc...) asparagine glycan is linked to Asn-136. Residues 145-165 form a helical membrane-spanning segment; it reads IAILVSFLSLGTFFGALIAPY. Residues 166–175 are Cytoplasmic-facing; that stretch reads ISDSYGRKPT. The chain crosses the membrane as a helical span at residues 176–196; that stretch reads IMFSTAVIFSIGNSLQVASGG. Residue Leu-197 is a topological domain, extracellular. The helical transmembrane segment at 198–218 threads the bilayer; the sequence is VLLIVGRVISGIGIGIISAVV. Residues 219 to 231 lie on the Cytoplasmic side of the membrane; that stretch reads PLYQAEAAQKNLR. The helical transmembrane segment at 232-252 threads the bilayer; it reads GAIISSYQWAITIGLLVSSAV. Topologically, residues 253-266 are extracellular; it reads SQGTHSKNGPSSYR. The helical transmembrane segment at 267–287 threads the bilayer; the sequence is IPIGLQYVWSSILAVGMIFLP. The Cytoplasmic portion of the chain corresponds to 288–357; it reads ESPRYYVLKD…SENRPKQILR (70 aa). The chain crosses the membrane as a helical span at residues 358–378; that stretch reads IFTGIAIQAFQQASGINFIFY. At 379-393 the chain is on the extracellular side; it reads YGVNFFNNTGVDNSY. Asn-385 is a glycosylation site (N-linked (GlcNAc...) asparagine). Residues 394–414 traverse the membrane as a helical segment; sequence LVSFISYAVNVAFSIPGMYLV. The Cytoplasmic portion of the chain corresponds to 415–421; sequence DRIGRRP. A helical membrane pass occupies residues 422–442; that stretch reads VLLAGGVIMAIANLVIAIVGV. Over 443–452 the chain is Extracellular; the sequence is SEGKTVVASK. A helical transmembrane segment spans residues 453–473; that stretch reads IMIAFICLFIAAFSATWGGVV. At 474–491 the chain is on the cytoplasmic side; the sequence is WVVSAELYPLGVRSKCTA. A helical membrane pass occupies residues 492 to 512; sequence ICAAANWLVNFTCALITPYIV. Residues 513-524 lie on the Extracellular side of the membrane; that stretch reads DVGSHTSSMGPK. Residues 525–545 form a helical membrane-spanning segment; it reads IFFIWGGLNVVAVIVVYFAVY. Residues 546–763 lie on the Cytoplasmic side of the membrane; the sequence is ETRGLTLEEI…SKHSQYTSPQ (218 aa). The span at 725–737 shows a compositional bias: low complexity; that stretch reads SSTTSNDTSFSPS. The tract at residues 725–763 is disordered; the sequence is SSTTSNDTSFSPSHNSNARTSSNWTSDLASKHSQYTSPQ. Over residues 738 to 763 the composition is skewed to polar residues; that stretch reads HNSNARTSSNWTSDLASKHSQYTSPQ.

This sequence belongs to the major facilitator superfamily. Sugar transporter (TC 2.A.1.1) family. Interacts with YCK1. Interacts with MTH1 and STD1. In terms of processing, phosphorylated in the C-terminal tail on Yck consensus sites in a yeast casein kinases YCK1 and YCK2 (Yck)-dependent manner. This phosphorylation is required for interaction with HXT corepressors MTH1 and STD1 and ultimately HXT expression.

It is found in the cell membrane. In terms of biological role, low-affinity high glucose sensor that is part of the sensor/receptor-repressor (SSR) glucose-signaling pathway, which detects extracellular glucose and induces expression of glucose transporters that bring glucose into the cell. The transporter-like sensor generates an intracellular signal in the presence of high levels of glucose to promote high glucose-induced expression of HXT1. Binding of glucose to the RGT2 transmembrane domain activates a downstream signaling cascade, leading to phosphorylation of the RGT1 corepressors MTH1 and STD1, targeting them for SCF(Grr1)-dependent ubiquitination and degradation. Depletion of the corepressors robs RGT1 of its ability to repress expression of HXT genes, leading to accumulation of glucose transporters in the plasma membrane. Even though RGT2 is similar to glucose transporters, it appears to be unable to transport glucose. The chain is High glucose sensor RGT2 from Saccharomyces cerevisiae (strain ATCC 204508 / S288c) (Baker's yeast).